We begin with the raw amino-acid sequence, 223 residues long: Protein Wnt-1 (223 aa).

Cystine bridges form between Cys7/Cys24, Cys72/Cys86, and Cys74/Cys81. A lipid anchor (O-palmitoleoyl serine; by PORCN) is attached at Ser78. A disordered region spans residues 110–135 (VTMRNDGSPSDRETESSFVPYNPSHK). Residues 125–135 (SSFVPYNPSHK) show a composition bias toward polar residues. 6 disulfides stabilise this stretch: Cys152-Cys183, Cys168-Cys178, Cys182-Cys222, Cys198-Cys213, Cys200-Cys210, and Cys205-Cys206. Asn169 carries N-linked (GlcNAc...) asparagine glycosylation.

Belongs to the Wnt family. In terms of processing, palmitoleoylation is required for efficient binding to frizzled receptors. Palmitoleoylation is necessary for proper trafficking to cell surface. Depalmitoleoylated by NOTUM, leading to inhibit Wnt signaling pathway.

The protein localises to the secreted. It is found in the extracellular space. Its subcellular location is the extracellular matrix. Ligand for members of the frizzled family of seven transmembrane receptors. Probable developmental protein. The protein is Protein Wnt-1 (WNT-1) of Strongylocentrotus purpuratus (Purple sea urchin).